The primary structure comprises 591 residues: L-fucose isomerase (591 aa).

Residues E338 and D362 each act as proton acceptor in the active site. E338, D362, and H529 together coordinate Mn(2+).

The protein belongs to the L-fucose isomerase family. Mn(2+) is required as a cofactor.

It is found in the cytoplasm. It carries out the reaction L-fucose = L-fuculose. Its pathway is carbohydrate degradation; L-fucose degradation; L-lactaldehyde and glycerone phosphate from L-fucose: step 1/3. In terms of biological role, converts the aldose L-fucose into the corresponding ketose L-fuculose. This is L-fucose isomerase from Phocaeicola vulgatus (strain ATCC 8482 / DSM 1447 / JCM 5826 / CCUG 4940 / NBRC 14291 / NCTC 11154) (Bacteroides vulgatus).